Reading from the N-terminus, the 481-residue chain is Molybdate-anion transporter (481 aa).

Helical transmembrane passes span 1 to 21 (MFVT…ALEI), 47 to 67 (LFLK…PYLY), 80 to 100 (IAIL…VAGW), 131 to 151 (FMLI…TTTF), 180 to 200 (WNYG…EWLG), 201 to 221 (LGPV…AWFV), 276 to 296 (VMLL…FVFL), 306 to 326 (PPLG…STLF), 341 to 361 (LLCL…FSTV), 371 to 391 (LLAF…VSFL), 403 to 423 (AVLA…LLAL), and 443 to 463 (FAGC…LFTV).

Belongs to the major facilitator superfamily.

The protein localises to the cell membrane. In terms of biological role, mediates high-affinity intracellular uptake of the rare oligo-element molybdenum. The protein is Molybdate-anion transporter (mfsd5) of Danio rerio (Zebrafish).